The primary structure comprises 555 residues: Cytochrome P450 monooxygenase abl2 (555 aa).

A run of 2 helical transmembrane segments spans residues 38-58 and 141-161; these read SFDL…ALFI and VFIG…APLA. N-linked (GlcNAc...) asparagine glycosylation is found at N325 and N360. A heme-binding site is contributed by C489.

It belongs to the cytochrome P450 family. Requires heme as cofactor.

The protein localises to the membrane. Its pathway is hormone biosynthesis. Cytochrome P450 monooxygenase; part of the gene cluster that mediates the biosynthesis of abscisic acid (ABA), a phytohormone that acts antagonistically toward salicylic acid (SA), jasmonic acid (JA) and ethylene (ETH) signaling, to impede plant defense responses. The first step of the pathway catalyzes the reaction from farnesyl diphosphate to alpha-ionylideneethane performed by the alpha-ionylideneethane synthase abl3 via a three-step reaction mechanism involving 2 neutral intermediates, beta-farnesene and allofarnesene. The cytochrome P450 monooxygenase abl1 might then be involved in the conversion of alpha-ionylideneethane to alpha-ionylideneacetic acid. Alpha-ionylideneacetic acid is further converted to abscisic acid in 2 steps involving the cytochrome P450 monooxygenase abl2 and the short-chain dehydrogenase/reductase abl4, via the intermediates 1'-deoxy-ABA or 1',4'-trans-diol-ABA, depending on the order of action of these 2 enzymes. Abl2 is responsible for the hydroxylation of carbon atom C-1' and abl4 might be involved in the oxidation of the C-4' carbon atom. This chain is Cytochrome P450 monooxygenase abl2, found in Leptosphaeria maculans (strain JN3 / isolate v23.1.3 / race Av1-4-5-6-7-8) (Blackleg fungus).